Reading from the N-terminus, the 292-residue chain is GTP cyclohydrolase FolE2 (292 aa).

Belongs to the GTP cyclohydrolase IV family.

It catalyses the reaction GTP + H2O = 7,8-dihydroneopterin 3'-triphosphate + formate + H(+). Its pathway is cofactor biosynthesis; 7,8-dihydroneopterin triphosphate biosynthesis; 7,8-dihydroneopterin triphosphate from GTP: step 1/1. Functionally, converts GTP to 7,8-dihydroneopterin triphosphate. In Staphylococcus carnosus (strain TM300), this protein is GTP cyclohydrolase FolE2.